The following is a 514-amino-acid chain: JmjC domain-containing histone demethylation protein 1 (514 aa).

Residues 4–62 (IDTCPICVESPLEDSTTFNNIAWLQCDICNQWFHASCLKIPKIEVNNLHSYHCEGCSKS) form a PHD-type zinc finger. Positions 220 to 384 (SDVDSFGKSF…MHLRIYEIEK (165 aa)) constitute a JmjC domain. Thr-267 serves as a coordination point for substrate. Positions 270 and 272 each coordinate Fe cation. Lys-287 lines the substrate pocket. His-352 serves as a coordination point for Fe cation. The segment covering 432-454 (KSEAHSRGEVHTKTETHAVKDEP) has biased composition (basic and acidic residues). The segment at 432 to 456 (KSEAHSRGEVHTKTETHAVKDEPQP) is disordered.

This sequence belongs to the JHDM1 histone demethylase family. The cofactor is Fe(2+).

It localises to the nucleus. It catalyses the reaction N(6),N(6)-dimethyl-L-lysyl(36)-[histone H3] + 2 2-oxoglutarate + 2 O2 = L-lysyl(36)-[histone H3] + 2 formaldehyde + 2 succinate + 2 CO2. Its function is as follows. Histone demethylase that specifically demethylates 'Lys-36' of histone H3, thereby playing a central role in histone code. The protein is JmjC domain-containing histone demethylation protein 1 (JHD1) of Debaryomyces hansenii (strain ATCC 36239 / CBS 767 / BCRC 21394 / JCM 1990 / NBRC 0083 / IGC 2968) (Yeast).